The following is a 274-amino-acid chain: Large ribosomal subunit protein uL2cy (274 aa).

2 disordered regions span residues 1-25 (MAIHLYKTSTPSTRNGTVDSQVKSN) and 223-274 (MNPV…RRSK). Residues 7-25 (KTSTPSTRNGTVDSQVKSN) are compositionally biased toward polar residues.

The protein belongs to the universal ribosomal protein uL2 family. In terms of assembly, part of the 50S ribosomal subunit.

The protein resides in the plastid. It is found in the chloroplast. This chain is Large ribosomal subunit protein uL2cy (rpl2-B), found in Atropa belladonna (Belladonna).